The following is a 639-amino-acid chain: DNA gyrase subunit B (639 aa).

Residues 392 to 402 (QAEELTRRKSA) show a composition bias toward basic and acidic residues. Positions 392 to 417 (QAEELTRRKSALESTSLPGKLADCQS) are disordered. The region spanning 423–537 (SELFIVEGDS…AGYVYAAQPP (115 aa)) is the Toprim domain. Mg(2+)-binding residues include glutamate 429, aspartate 502, and aspartate 504.

This sequence belongs to the type II topoisomerase GyrB family. In terms of assembly, heterotetramer, composed of two GyrA and two GyrB chains. In the heterotetramer, GyrA contains the active site tyrosine that forms a transient covalent intermediate with DNA, while GyrB binds cofactors and catalyzes ATP hydrolysis. The cofactor is Mg(2+). Mn(2+) serves as cofactor. It depends on Ca(2+) as a cofactor.

Its subcellular location is the cytoplasm. The catalysed reaction is ATP-dependent breakage, passage and rejoining of double-stranded DNA.. A type II topoisomerase that negatively supercoils closed circular double-stranded (ds) DNA in an ATP-dependent manner to modulate DNA topology and maintain chromosomes in an underwound state. Negative supercoiling favors strand separation, and DNA replication, transcription, recombination and repair, all of which involve strand separation. Also able to catalyze the interconversion of other topological isomers of dsDNA rings, including catenanes and knotted rings. Type II topoisomerases break and join 2 DNA strands simultaneously in an ATP-dependent manner. This chain is DNA gyrase subunit B, found in Haloferax lucentense (strain DSM 14919 / JCM 9276 / NCIMB 13854 / Aa 2.2) (Haloferax alicantei).